A 152-amino-acid chain; its full sequence is Ribosome maturation factor RimP (152 aa).

The protein belongs to the RimP family.

Its subcellular location is the cytoplasm. Its function is as follows. Required for maturation of 30S ribosomal subunits. This is Ribosome maturation factor RimP from Alteromonas mediterranea (strain DSM 17117 / CIP 110805 / LMG 28347 / Deep ecotype).